A 408-amino-acid polypeptide reads, in one-letter code: Putative transporter AmpG 2 (408 aa).

11 helical membrane passes run 11–31 (IFNILFILIIAFPGGLIYLLT), 49–69 (IGLFGLVNFIHIFKFLWGPLL), 84–104 (YCLVITLINCIFCVYVLTSFN), 110–130 (IPFVLCLVVLAFFSSIYDMLI), 154–174 (FRIGILISGSGALYLSTIISW), 177–197 (VYRTMAILCIPSLLLIIFYPL), 224–244 (CIVIISFMLLYRLQDSFLSIM), 261–281 (VGYKAFGMCATIFGGVIGGFL), 294–311 (VLIYHALSSLSFIYLYFL), 353–373 (IALITSITNVGTILIGSISGY), and 382–402 (YFFIVAGLCFIPAYILILYLP).

Belongs to the major facilitator superfamily.

Its subcellular location is the cell inner membrane. The chain is Putative transporter AmpG 2 (ampG2) from Rickettsia prowazekii (strain Madrid E).